Consider the following 179-residue polypeptide: Protein GrpE (179 aa).

This sequence belongs to the GrpE family. In terms of assembly, homodimer.

Its subcellular location is the cytoplasm. Participates actively in the response to hyperosmotic and heat shock by preventing the aggregation of stress-denatured proteins, in association with DnaK and GrpE. It is the nucleotide exchange factor for DnaK and may function as a thermosensor. Unfolded proteins bind initially to DnaJ; upon interaction with the DnaJ-bound protein, DnaK hydrolyzes its bound ATP, resulting in the formation of a stable complex. GrpE releases ADP from DnaK; ATP binding to DnaK triggers the release of the substrate protein, thus completing the reaction cycle. Several rounds of ATP-dependent interactions between DnaJ, DnaK and GrpE are required for fully efficient folding. In Rickettsia felis (strain ATCC VR-1525 / URRWXCal2) (Rickettsia azadi), this protein is Protein GrpE.